The sequence spans 204 residues: Urease accessory protein UreG 1 (204 aa).

GTP is bound at residue 14-21; sequence GPVGSGKT.

This sequence belongs to the SIMIBI class G3E GTPase family. UreG subfamily. As to quaternary structure, homodimer. UreD, UreF and UreG form a complex that acts as a GTP-hydrolysis-dependent molecular chaperone, activating the urease apoprotein by helping to assemble the nickel containing metallocenter of UreC. The UreE protein probably delivers the nickel.

The protein localises to the cytoplasm. Its function is as follows. Facilitates the functional incorporation of the urease nickel metallocenter. This process requires GTP hydrolysis, probably effectuated by UreG. The sequence is that of Urease accessory protein UreG 1 from Methylorubrum populi (strain ATCC BAA-705 / NCIMB 13946 / BJ001) (Methylobacterium populi).